The chain runs to 263 residues: Methylesterase 4 (263 aa).

Ser84 acts as the Acyl-ester intermediate in catalysis. Catalysis depends on charge relay system residues Asp213 and His241.

Belongs to the AB hydrolase superfamily. Methylesterase family.

The enzyme catalyses methyl salicylate + H2O = salicylate + methanol + H(+). The protein operates within plant hormone biosynthesis. With respect to regulation, esterase activity is down-regulated by salicylic acid (SA). In terms of biological role, methylesterase shown to have carboxylesterase activity and methyl salicylate (MeSA) esterase activity in vitro. The polypeptide is Methylesterase 4 (Arabidopsis thaliana (Mouse-ear cress)).